Consider the following 298-residue polypeptide: ADP/ATP translocase 3 (298 aa).

N-acetylmethionine is present on Met1. Residues 1 to 7 (MTEQAIS) are Mitochondrial intermembrane-facing. Position 2 is an N-acetylthreonine; in ADP/ATP translocase 3, N-terminally processed (Thr2). A Solcar 1 repeat occupies 6–98 (ISFAKDFLAG…FAFKDKYKQI (93 aa)). Residues 8–37 (FAKDFLAGGIAAAISKTAVAPIERVKLLLQ) traverse the membrane as a helical segment. Topologically, residues 38-74 (VQHASKQIAADKQYKGIVDCIVRIPKEQGVLSFWRGN) are mitochondrial matrix. At Lys52 the chain carries N6,N6,N6-trimethyllysine. A helical membrane pass occupies residues 75 to 99 (LANVIRYFPTQALNFAFKDKYKQIF). Positions 80 and 92 each coordinate ADP. The Mitochondrial intermembrane portion of the chain corresponds to 100–109 (LGGVDKHTQF). Lys105 carries the N6-acetyllysine modification. The chain crosses the membrane as a helical span at residues 110-130 (WRYFAGNLASGGAAGATSLCF). 2 Solcar repeats span residues 111 to 201 (RYFA…AKGM) and 212 to 297 (VSWM…LKKV). The Mitochondrial matrix segment spans residues 131 to 178 (VYPLDFARTRLAADVGKSATEREFKGLGDCLVKITKSDGIRGLYQGFN). Residues 179–199 (VSVQGIIIYRAAYFGVYGTAK) traverse the membrane as a helical segment. At 200–210 (GMLPDPRNTHI) the chain is on the mitochondrial intermembrane side. Residues 211–231 (VVSWMIAQTVTAVAGVFSYPF) traverse the membrane as a helical segment. The Mitochondrial matrix segment spans residues 232–273 (DTVRRRMMMQSGRKGADIMYKGTLDCWRKIFKDEGGKAFFKG). ADP is bound at residue Arg235. The segment at 235–240 (RRRMMM) is important for transport activity. Positions 235-240 (RRRMMM) match the Nucleotide carrier signature motif motif. An N6-acetyllysine modification is found at Lys268. A helical transmembrane segment spans residues 274–291 (AWSNVLRGMGGAFVLVLY). The Mitochondrial intermembrane portion of the chain corresponds to 292–298 (DELKKVI).

It belongs to the mitochondrial carrier (TC 2.A.29) family. As to quaternary structure, monomer. Found in a complex with ARL2, ARL2BP and SLC25A6/ANT3. Post-translationally, trimethylated by ANTKMT at Lys-52.

The protein localises to the mitochondrion inner membrane. Its subcellular location is the membrane. It carries out the reaction ADP(in) + ATP(out) = ADP(out) + ATP(in). The enzyme catalyses H(+)(in) = H(+)(out). The matrix-open state (m-state) is inhibited by the membrane-permeable bongkrekic acid (BKA). The cytoplasmic-open state (c-state) is inhibited by the membrane-impermeable toxic inhibitor carboxyatractyloside (CATR). Proton transporter activity is inhibited by ADP:ATP antiporter activity. Its function is as follows. ADP:ATP antiporter that mediates import of ADP into the mitochondrial matrix for ATP synthesis, and export of ATP out to fuel the cell. Cycles between the cytoplasmic-open state (c-state) and the matrix-open state (m-state): operates by the alternating access mechanism with a single substrate-binding site intermittently exposed to either the cytosolic (c-state) or matrix (m-state) side of the inner mitochondrial membrane. In addition to its ADP:ATP antiporter activity, also involved in mitochondrial uncoupling and mitochondrial permeability transition pore (mPTP) activity. Plays a role in mitochondrial uncoupling by acting as a proton transporter: proton transport uncouples the proton flows via the electron transport chain and ATP synthase to reduce the efficiency of ATP production and cause mitochondrial thermogenesis. Proton transporter activity is inhibited by ADP:ATP antiporter activity, suggesting that SLC25A6/ANT3 acts as a master regulator of mitochondrial energy output by maintaining a delicate balance between ATP production (ADP:ATP antiporter activity) and thermogenesis (proton transporter activity). Proton transporter activity requires free fatty acids as cofactor, but does not transport it. Also plays a key role in mPTP opening, a non-specific pore that enables free passage of the mitochondrial membranes to solutes of up to 1.5 kDa, and which contributes to cell death. It is however unclear if SLC25A6/ANT3 constitutes a pore-forming component of mPTP or regulates it. This Sus scrofa (Pig) protein is ADP/ATP translocase 3.